We begin with the raw amino-acid sequence, 425 residues long: MLDLKKLRSNTEEVKKALSNRGEDFDVNVIDEVIALDEERRKILVDVEALKKQRNEVSAEIPKRKKAGEDVTEVMAEMREIGDKIKADDAKVAELNDKINYIMLRIPNIPNPAVPEGETDEDNVEIKRWGEPTKFNFEPKAHWDLGTDLDLLDFERGGKVAGSRFTVYKGMGARLERSIINYFLDKHTFENGYTEVLPPYMVNRDSMTGTGQLPKFEEDAFKVENNGYFLIPTAEVPVTNMYRNETLEGDKLPIKHAAYSACFRAEAGSAGRDTRGLIRQHQFNKVELVKFCKPEQSYEELDKLVQDAESVLQGLGLPYRIVRICKGDLGFTAALKYDIEVWMPSYNRYVEISSCSNFEDFQARRANIKYKNSPKEKPQFVHTLNGSGVAIGRTVAAILENYQQEDGSVVIPEALKEYMRCDLLK.

233–235 (TAE) contributes to the L-serine binding site. 264–266 (RAE) serves as a coordination point for ATP. Glutamate 287 serves as a coordination point for L-serine. 351–354 (EISS) contributes to the ATP binding site. Serine 387 provides a ligand contact to L-serine.

The protein belongs to the class-II aminoacyl-tRNA synthetase family. Type-1 seryl-tRNA synthetase subfamily. In terms of assembly, homodimer. The tRNA molecule binds across the dimer.

It localises to the cytoplasm. It carries out the reaction tRNA(Ser) + L-serine + ATP = L-seryl-tRNA(Ser) + AMP + diphosphate + H(+). The catalysed reaction is tRNA(Sec) + L-serine + ATP = L-seryl-tRNA(Sec) + AMP + diphosphate + H(+). The protein operates within aminoacyl-tRNA biosynthesis; selenocysteinyl-tRNA(Sec) biosynthesis; L-seryl-tRNA(Sec) from L-serine and tRNA(Sec): step 1/1. Its function is as follows. Catalyzes the attachment of serine to tRNA(Ser). Is also able to aminoacylate tRNA(Sec) with serine, to form the misacylated tRNA L-seryl-tRNA(Sec), which will be further converted into selenocysteinyl-tRNA(Sec). The sequence is that of Serine--tRNA ligase from Clostridium perfringens (strain 13 / Type A).